The chain runs to 357 residues: MVIYHRKVVFTYVRAKRFYHFLNIEMVTDFKSLLPVIDISPLLAKCDDFDMAEDAGVVEVVGKLDRACRDVGFFYVIGHGISDDLINKVKEMTHQFFELPYEEKLKIKITPTAGYRGYQRIGVNFTSGKQDMHEAIDCYREFKQGKHGDIGKVLEGPNQWPGNPQEYKDLMEKYIKLCTDLSRNILRGISLALGGSPYEFEGKMLRDPFWVMRIIGYPGVNQENVIGCGAHTDYGLLTLINQDDDKTALQVKNVDGDWIPAIPIPGSFICNIGDMLTILSNGVYQSTLHKVINNSPKYRVCVAFFYETNFEAEVEPLDIFKEKHPRKETSQVAKRVVYGQHLINKVLTTFANLVENS.

Residues 208–308 (PFWVMRIIGY…RVCVAFFYET (101 aa)) form the Fe2OG dioxygenase domain. 3 residues coordinate Fe cation: histidine 231, aspartate 233, and histidine 289. Arginine 299 is a 2-oxoglutarate binding site.

The protein belongs to the iron/ascorbate-dependent oxidoreductase family. Fe(2+) serves as cofactor. As to expression, expressed in senescent leaves.

It is found in the cytoplasm. The protein localises to the cytosol. It carries out the reaction L-homoarginine + 2-oxoglutarate + O2 = 6-hydroxy-L-homoarginine + succinate + CO2. The enzyme catalyses L-arginine + 2-oxoglutarate + O2 = 5-hydroxy-L-arginine + succinate + CO2. With respect to regulation, slightly inhibited by canavanine (Can), the 5-oxa-analog of arginine. In terms of biological role, 2-oxoglutarate-dependent dioxygenase catalyzing homoarginine 6-hydroxylation and arginine-5-hydroxylation thus producing 6-hydroxy-L-homoarginine and 5-hydroxy-L-arginine, respectively. Guanidine (Gd) is in turn synthesized by the spontaneous conversion of 6-hydroxy-L-homoarginine and 5-hydroxy-L-arginine to (S)-2-amino-6-oxohexanoate (RHEA:79843) and L-glutamate 5-semialdehyde (RHEA:31527); guanidine is a nitrogen-rich compound that may serve as a defense or signaling substance. This chain is Homoarginine-6-hydroxylase 2-ODD-C23.2, found in Arabidopsis thaliana (Mouse-ear cress).